Here is a 541-residue protein sequence, read N- to C-terminus: MSKYSGEEFSNNGDFYDDFAHTGDPALDMEYERNYYASRMPENVKYFLMNFCQAVKEGNLYDIQNMYENTFPQISDHHFDKSSWPEETEVGALVENDKVFMILYKELYYRHIHARIPGGPKLDQRINSFFNYCDFFNLIISAPNPVMLELPDIWLWELVDEFVYQFQNFAQYRARLTDKSQEEIQQLCVNHSNVWSILCILNVLHSLVDISNIKKQLEAISGGIDPNTVSGDFGKLSFYKMLGYFSLVGLLRVHSLLGDYYQAIKVLEPIEIHKKSAYSHIPACQISTSYYVGFAYMMMRRYADAIRTFSDILLYIQRTKQLYSTRSYQNDQINKQAEQMYHLLAICLVLHPQCIDESIQQVLREKNYHDAMFKMQCGDLEVFKSFFVFACPRFVSPCPPAADAPMEDYVKDPMEHQLQVFMDEVRQQKDLPTTRSYLKLYTTLPLAKLASFIDPNANDDDVSKLLIRLLCFKHKMRNLVWSKGPSGLEGTFKSGSELDFYIDDDMIHIADTKVSHRYGDFFVRKIMKFNDLNRKLKNINI.

The 209-residue stretch at 308-516 (TFSDILLYIQ…IHIADTKVSH (209 aa)) folds into the PCI domain.

It belongs to the eIF-3 subunit L family. As to quaternary structure, component of the eukaryotic translation initiation factor 3 (eIF-3) complex. The eIF-3 complex interacts with pix.

The protein localises to the cytoplasm. In terms of biological role, component of the eukaryotic translation initiation factor 3 (eIF-3) complex, which is involved in protein synthesis of a specialized repertoire of mRNAs and, together with other initiation factors, stimulates binding of mRNA and methionyl-tRNAi to the 40S ribosome. The eIF-3 complex specifically targets and initiates translation of a subset of mRNAs involved in cell proliferation. This chain is Eukaryotic translation initiation factor 3 subunit L, found in Drosophila pseudoobscura pseudoobscura (Fruit fly).